A 409-amino-acid chain; its full sequence is TM2 domain-containing protein ZK858.5 (409 aa).

In terms of domain architecture, TM2 spans 8 to 55 (VKPWIVRIILIVGGLFGAHRLYLKQVPEAFVFFSTLGVLLIGWLYDSF). A run of 6 helical transmembrane segments spans residues 10–30 (PWIVRIILIVGGLFGAHRLYL), 37–57 (FVFFSTLGVLLIGWLYDSFMF), 104–124 (VLYGSYIGLATWLACTVTFGW), 127–147 (INLIPFICVVALGITAGIYII), 168–190 (MFIMVRLAQTTVFRAIFLTAIVS), and 209–229 (HFLFWSSLFLMLVCVILLGCS).

Belongs to the TM2 family.

It localises to the membrane. The polypeptide is TM2 domain-containing protein ZK858.5 (Caenorhabditis elegans).